A 101-amino-acid chain; its full sequence is Integration host factor subunit alpha (101 aa).

It belongs to the bacterial histone-like protein family. Heterodimer of an alpha and a beta chain.

This protein is one of the two subunits of integration host factor, a specific DNA-binding protein that functions in genetic recombination as well as in transcriptional and translational control. This chain is Integration host factor subunit alpha, found in Alkalilimnicola ehrlichii (strain ATCC BAA-1101 / DSM 17681 / MLHE-1).